Consider the following 353-residue polypeptide: 3'(2'),5'-bisphosphate nucleotidase 1 (353 aa).

Catalysis depends on aspartate 46, which acts as the Proton acceptor. Mg(2+) is bound by residues glutamate 71, aspartate 134, isoleucine 136, and aspartate 137. Residue threonine 139 is the Proton acceptor of the active site. Adenosine 3',5'-bisphosphate-binding residues include threonine 139, histidine 235, serine 259, lysine 262, arginine 276, and aspartate 288. 5 residues coordinate AMP: histidine 235, serine 259, lysine 262, arginine 276, and aspartate 288. Position 288 (aspartate 288) interacts with Mg(2+).

Belongs to the inositol monophosphatase superfamily. Mg(2+) is required as a cofactor. In terms of tissue distribution, expressed in roots, leaves, stems, flowers and siliques.

The catalysed reaction is 3'-phosphoadenylyl sulfate + H2O = adenosine 5'-phosphosulfate + phosphate. The enzyme catalyses adenosine 3',5'-bisphosphate + H2O = AMP + phosphate. It carries out the reaction adenosine 2',5'-bisphosphate + H2O = AMP + phosphate. It catalyses the reaction 1D-myo-inositol 1,4-bisphosphate + H2O = 1D-myo-inositol 4-phosphate + phosphate. The catalysed reaction is 1D-myo-inositol 1,3,4-trisphosphate + H2O = 1D-myo-inositol 3,4-bisphosphate + phosphate. Its pathway is signal transduction; phosphatidylinositol signaling pathway. Its activity is regulated as follows. Inhibited non-competitively by Li(+) (IC(50)=0.20 mM) and Na(+) (IC(50)=200 mM). Its function is as follows. Phosphatase that converts adenosine 3'-phosphate 5'-phosphosulfate (PAPS) to adenosine 5'-phosphosulfate (APS) and 3'(2')-phosphoadenosine 5'-phosphate (PAP) to AMP. May regulate the flux of sulfur in the sulfur-activation pathway by converting PAPS to APS. May play a role in the biosynthesis of sulfate conjugates and RNA processing. Is also able to hydrolyze inositol 1,4-bisphosphate and inositol 1,3,4-trisphosphate. Could be considered as a negative regulator of abscisic acid (ABA)- and stress-responsive genes, through modulating the inositol 1,4,5-trisphosphate (IP3) turnover. Is also involved in salt tolerance. Acts as a suppressor of virus- and transgene-induced silencing. The sequence is that of 3'(2'),5'-bisphosphate nucleotidase 1 from Arabidopsis thaliana (Mouse-ear cress).